The primary structure comprises 347 residues: Protein RecA (347 aa).

68–75 (GPESSGKT) serves as a coordination point for ATP.

Belongs to the RecA family.

It is found in the cytoplasm. Can catalyze the hydrolysis of ATP in the presence of single-stranded DNA, the ATP-dependent uptake of single-stranded DNA by duplex DNA, and the ATP-dependent hybridization of homologous single-stranded DNAs. It interacts with LexA causing its activation and leading to its autocatalytic cleavage. This Rhodococcus jostii (strain RHA1) protein is Protein RecA.